We begin with the raw amino-acid sequence, 113 residues long: uncharacterized protein (113 aa).

The CHY-type; degenerate zinc-finger motif lies at 16–96 (LVDNETRCFH…STVHCKYCNH (81 aa)). Residues Cys-23, His-25, Cys-46, Cys-49, Cys-73, Cys-76, Cys-91, and Cys-94 each coordinate Zn(2+).

The protein localises to the cytoplasm. It is found in the nucleus. This is an uncharacterized protein from Schizosaccharomyces pombe (strain 972 / ATCC 24843) (Fission yeast).